The chain runs to 300 residues: GTPase Era (300 aa).

The 172-residue stretch at 5-176 folds into the Era-type G domain; sequence RSGFVCLIGR…IDVLAAALPP (172 aa). A G1 region spans residues 13 to 20; the sequence is GRPNTGKS. 13 to 20 serves as a coordination point for GTP; the sequence is GRPNTGKS. The G2 stretch occupies residues 39–43; that stretch reads QTTRH. The segment at 61 to 64 is G3; it reads DTPG. GTP is bound by residues 61-65 and 125-128; these read DTPGL and TKID. The tract at residues 125 to 128 is G4; sequence TKID. The G5 stretch occupies residues 155–157; the sequence is VSA. Positions 207-286 constitute a KH type-2 domain; sequence VHDELPHSLA…YLDLHVNVAK (80 aa).

This sequence belongs to the TRAFAC class TrmE-Era-EngA-EngB-Septin-like GTPase superfamily. Era GTPase family. Monomer.

It localises to the cell envelope. Its subcellular location is the secreted. The protein localises to the cell wall. Exhibits GTPase activity. Binds RNA but is probably not involved in ribosome assembly in mycobacteria. The protein is GTPase Era of Mycobacterium leprae (strain TN).